The following is a 254-amino-acid chain: Pyruvate dehydrogenase complex repressor (254 aa).

The region spanning 9 to 77 is the HTH gntR-type domain; sequence PKLSDVIEQQ…QGGGTFVQSS (69 aa). Residues 37 to 56 constitute a DNA-binding region (H-T-H motif); it reads ERELAKQFDVSRPSLREAIQ.

Its function is as follows. Transcriptional repressor for the pyruvate dehydrogenase complex genes aceEF and lpd. The protein is Pyruvate dehydrogenase complex repressor (pdhR) of Escherichia coli O6:H1 (strain CFT073 / ATCC 700928 / UPEC).